Consider the following 257-residue polypeptide: Acetylglutamate kinase (257 aa).

Substrate contacts are provided by residues 43–44, Arg65, and Asn157; that span reads GG. Residues 180–185 and 208–210 each bind ATP; these read DVSGIL and IIT.

It belongs to the acetylglutamate kinase family. ArgB subfamily. Homodimer.

Its subcellular location is the cytoplasm. The catalysed reaction is N-acetyl-L-glutamate + ATP = N-acetyl-L-glutamyl 5-phosphate + ADP. It functions in the pathway amino-acid biosynthesis; L-arginine biosynthesis; N(2)-acetyl-L-ornithine from L-glutamate: step 2/4. In terms of biological role, catalyzes the ATP-dependent phosphorylation of N-acetyl-L-glutamate. The sequence is that of Acetylglutamate kinase from Salmonella agona (strain SL483).